A 1127-amino-acid polypeptide reads, in one-letter code: Carbamoyl phosphate synthase large chain (1127 aa).

The segment at methionine 1–aspartate 402 is carboxyphosphate synthetic domain. The ATP site is built by arginine 129, arginine 169, glycine 175, glycine 176, glutamate 208, isoleucine 210, glutamate 215, glycine 241, valine 242, histidine 243, glutamine 285, and glutamate 299. Positions lysine 133–leucine 328 constitute an ATP-grasp 1 domain. The Mg(2+) site is built by glutamine 285, glutamate 299, and asparagine 301. Residues glutamine 285, glutamate 299, and asparagine 301 each contribute to the Mn(2+) site. The oligomerization domain stretch occupies residues lysine 403–threonine 551. The segment at glutamate 552–tyrosine 962 is carbamoyl phosphate synthetic domain. In terms of domain architecture, ATP-grasp 2 spans glycine 681–alanine 881. ATP contacts are provided by arginine 717, lysine 765, leucine 767, glutamate 772, glycine 797, valine 798, histidine 799, serine 800, glutamine 840, and glutamate 852. Residues glutamine 840, glutamate 852, and asparagine 854 each contribute to the Mg(2+) site. Positions 840, 852, and 854 each coordinate Mn(2+). Positions aspartate 963–phenylalanine 1127 are allosteric domain. Residues glycine 964–phenylalanine 1127 enclose the MGS-like domain.

This sequence belongs to the CarB family. As to quaternary structure, composed of two chains; the small (or glutamine) chain promotes the hydrolysis of glutamine to ammonia, which is used by the large (or ammonia) chain to synthesize carbamoyl phosphate. Tetramer of heterodimers (alpha,beta)4. Mg(2+) serves as cofactor. Mn(2+) is required as a cofactor.

The enzyme catalyses hydrogencarbonate + L-glutamine + 2 ATP + H2O = carbamoyl phosphate + L-glutamate + 2 ADP + phosphate + 2 H(+). It catalyses the reaction hydrogencarbonate + NH4(+) + 2 ATP = carbamoyl phosphate + 2 ADP + phosphate + 2 H(+). It participates in amino-acid biosynthesis; L-arginine biosynthesis; carbamoyl phosphate from bicarbonate: step 1/1. The protein operates within pyrimidine metabolism; UMP biosynthesis via de novo pathway; (S)-dihydroorotate from bicarbonate: step 1/3. Its function is as follows. Large subunit of the glutamine-dependent carbamoyl phosphate synthetase (CPSase). CPSase catalyzes the formation of carbamoyl phosphate from the ammonia moiety of glutamine, carbonate, and phosphate donated by ATP, constituting the first step of 2 biosynthetic pathways, one leading to arginine and/or urea and the other to pyrimidine nucleotides. The large subunit (synthetase) binds the substrates ammonia (free or transferred from glutamine from the small subunit), hydrogencarbonate and ATP and carries out an ATP-coupled ligase reaction, activating hydrogencarbonate by forming carboxy phosphate which reacts with ammonia to form carbamoyl phosphate. In Bifidobacterium longum (strain DJO10A), this protein is Carbamoyl phosphate synthase large chain.